The primary structure comprises 639 residues: 2-oxoacid:ferredoxin oxidoreductase 1, subunit alpha (639 aa).

The YPITP motif motif lies at 266-270 (YPITP). Substrate contacts are provided by T269 and R352.

Heterodimer composed of an alpha and a beta subunit.

The enzyme catalyses a 2-oxocarboxylate + 2 oxidized [2Fe-2S]-[ferredoxin] + CoA = an acyl-CoA + 2 reduced [2Fe-2S]-[ferredoxin] + CO2 + H(+). Catalyzes the coenzyme A-dependent oxidative decarboxylation of different 2-oxoacids such as pyruvate, 2-oxobutyrate and glyoxylate to form their CoA derivatives. The polypeptide is 2-oxoacid:ferredoxin oxidoreductase 1, subunit alpha (Aeropyrum pernix (strain ATCC 700893 / DSM 11879 / JCM 9820 / NBRC 100138 / K1)).